We begin with the raw amino-acid sequence, 322 residues long: Glycerate dehydrogenase (322 aa).

Residues 158 to 159 (SI), aspartate 178, 239 to 241 (TAR), and aspartate 265 contribute to the NAD(+) site. The active site involves arginine 241. Glutamate 270 is an active-site residue. The Proton donor role is filled by histidine 288. 288–291 (HIGS) serves as a coordination point for NAD(+).

The protein belongs to the D-isomer specific 2-hydroxyacid dehydrogenase family. In terms of assembly, homodimer.

The enzyme catalyses (R)-glycerate + NAD(+) = 3-hydroxypyruvate + NADH + H(+). Its pathway is one-carbon metabolism; formaldehyde assimilation via serine pathway. Active on hydroxypyruvate and glyoxylate. The sequence is that of Glycerate dehydrogenase from Hyphomicrobium methylovorum.